The chain runs to 236 residues: Uridylate kinase (236 aa).

10 to 13 is a binding site for ATP; that stretch reads KLSG. Position 52 (glycine 52) interacts with UMP. Residues glycine 53 and arginine 57 each coordinate ATP. Residues aspartate 72 and 133 to 140 contribute to the UMP site; that span reads TGNPFFTT. Residues threonine 160, tyrosine 166, and aspartate 169 each coordinate ATP.

It belongs to the UMP kinase family. As to quaternary structure, homohexamer.

It localises to the cytoplasm. It carries out the reaction UMP + ATP = UDP + ADP. Its pathway is pyrimidine metabolism; CTP biosynthesis via de novo pathway; UDP from UMP (UMPK route): step 1/1. With respect to regulation, inhibited by UTP. Functionally, catalyzes the reversible phosphorylation of UMP to UDP. The polypeptide is Uridylate kinase (Bacteroides fragilis (strain ATCC 25285 / DSM 2151 / CCUG 4856 / JCM 11019 / LMG 10263 / NCTC 9343 / Onslow / VPI 2553 / EN-2)).